A 229-amino-acid polypeptide reads, in one-letter code: Potassium/proton antiporter CemA (229 aa).

3 helical membrane passes run 6–26 (AFIP…ISLC), 107–127 (ILHF…SFWG), and 189–209 (ILSG…KYWI).

Belongs to the CemA family.

It localises to the plastid. The protein localises to the chloroplast inner membrane. The enzyme catalyses K(+)(in) + H(+)(out) = K(+)(out) + H(+)(in). Its function is as follows. Contributes to K(+)/H(+) antiport activity by supporting proton efflux to control proton extrusion and homeostasis in chloroplasts in a light-dependent manner to modulate photosynthesis. Prevents excessive induction of non-photochemical quenching (NPQ) under continuous-light conditions. Indirectly promotes efficient inorganic carbon uptake into chloroplasts. This Barbarea verna (Land cress) protein is Potassium/proton antiporter CemA.